A 100-amino-acid chain; its full sequence is Small ribosomal subunit protein bS20 (100 aa).

The protein belongs to the bacterial ribosomal protein bS20 family.

Functionally, binds directly to 16S ribosomal RNA. The protein is Small ribosomal subunit protein bS20 of Synechococcus sp. (strain JA-3-3Ab) (Cyanobacteria bacterium Yellowstone A-Prime).